Reading from the N-terminus, the 184-residue chain is Casparian strip membrane protein 3 (184 aa).

Topologically, residues 1-22 (MEGSGEHGETSKGPLSKGVSRG) are cytoplasmic. Residues 23 to 43 (LCILDLIFRVIAVIGTLASAI) traverse the membrane as a helical segment. Topologically, residues 44-72 (AMGTTNQTMPFFTQFVQFKERYSDLPTLT) are extracellular. Asn-49 carries an N-linked (GlcNAc...) asparagine glycan. Residues 73–93 (FFVVANSIASAYLIISLPLSI) traverse the membrane as a helical segment. Topologically, residues 94 to 105 (VHIIRSRAKYSR) are cytoplasmic. Residues 106–126 (LILIFFDVAMLALVTAAASAG) traverse the membrane as a helical segment. At 127–159 (AAIVYLAHNGNVSANWFAICQQFDSFCERISGS) the chain is on the extracellular side. Asn-137 carries N-linked (GlcNAc...) asparagine glycosylation. A helical transmembrane segment spans residues 160–180 (LIGSFAAMVVLILLILLSAVA). At 181-184 (LARR) the chain is on the cytoplasmic side.

The protein belongs to the Casparian strip membrane proteins (CASP) family. As to quaternary structure, homodimer and heterodimers.

Its subcellular location is the cell membrane. Regulates membrane-cell wall junctions and localized cell wall deposition. Required for establishment of the Casparian strip membrane domain (CSD) and the subsequent formation of Casparian strips, a cell wall modification of the root endodermis that determines an apoplastic barrier between the intraorganismal apoplasm and the extraorganismal apoplasm and prevents lateral diffusion. This chain is Casparian strip membrane protein 3, found in Brachypodium distachyon (Purple false brome).